Reading from the N-terminus, the 173-residue chain is Mesencephalic astrocyte-derived neurotrophic factor homolog (173 aa).

A signal peptide spans M1–A22. Intrachain disulfides connect C28/C114, C31/C103, C61/C72, and C148/C151.

Belongs to the ARMET family.

It is found in the secreted. In terms of biological role, required during the maturation of the embryonic nervous system for maintenance of neuronal and cuticular connectivity. Essential for maintenance of dopaminergic neurons and dopamine levels. The chain is Mesencephalic astrocyte-derived neurotrophic factor homolog from Drosophila simulans (Fruit fly).